The following is a 626-amino-acid chain: Probable potassium transport system protein Kup (626 aa).

The next 12 membrane-spanning stretches (helical) occupy residues 13–33, 53–73, 102–122, 138–158, 169–189, 207–227, 248–268, 277–297, 338–358, 367–387, 399–419, and 421–441; these read VALM…SPLY, VLSI…VLLI, FFVV…MITP, HTLD…LFAI, LFGP…GWQV, FVFE…LALT, WFSM…ALLL, PFFL…ATVA, IYLP…VITF, AYGF…FAVL, WMLV…ANIF, and IHEG…LMMT.

Belongs to the HAK/KUP transporter (TC 2.A.72) family.

The protein resides in the cell inner membrane. It carries out the reaction K(+)(in) + H(+)(in) = K(+)(out) + H(+)(out). Its function is as follows. Transport of potassium into the cell. Likely operates as a K(+):H(+) symporter. The polypeptide is Probable potassium transport system protein Kup (Bordetella avium (strain 197N)).